A 317-amino-acid chain; its full sequence is Tenomodulin (317 aa).

Topologically, residues 1–30 (MAKNPPENCEDCHILNAEAFKSKKICKSLK) are cytoplasmic. A helical; Signal-anchor for type II membrane protein transmembrane segment spans residues 31-50 (ICGLVFGILALTLIVLFWGS). At 51-317 (KHFWPEVPKK…WWVARMLGRV (267 aa)) the chain is on the extracellular side. The region spanning 93-186 (GNGTDETLEV…ICDNVTMYWI (94 aa)) is the BRICHOS domain. An N-linked (GlcNAc...) asparagine glycan is attached at asparagine 94. Cysteine 120 and cysteine 178 are oxidised to a cystine. The N-linked (GlcNAc...) asparagine glycan is linked to asparagine 180. Residue serine 239 is modified to Phosphoserine.

The protein belongs to the chondromodulin-1 family. Highly expressed in hypovascular connective tissues such as tendons. Also has strong expression in adipose tissue.

The protein localises to the membrane. It is found in the nucleus envelope. It localises to the cytoplasm. In terms of biological role, may be an angiogenesis inhibitor. The polypeptide is Tenomodulin (TNMD) (Homo sapiens (Human)).